Reading from the N-terminus, the 190-residue chain is Histone H5 (190 aa).

Positions 1–29 (MTESLVLSPAPAKPKRVKASRRSASHPTY) are disordered. The span at 13 to 24 (KPKRVKASRRSA) shows a compositional bias: basic residues. Phosphoserine is present on residues serine 23, serine 30, serine 146, and serine 167. One can recognise an H15 domain in the interval 25–98 (SHPTYSEMIA…GASGSFRLAK (74 aa)). Residues 87 to 190 (GVGASGSFRL…SGARKSPKKK (104 aa)) form a disordered region. The segment covering 104-190 (RSPGKKKKAV…SGARKSPKKK (87 aa)) has biased composition (basic residues).

This sequence belongs to the histone H1/H5 family. Erythroid cells.

It localises to the nucleus. The protein localises to the chromosome. Functionally, histone H5 performs the same function as H1, being necessary for the condensation of nucleosome chains into higher order structures, and replaces histone H1 in certain cells. This chain is Histone H5, found in Gallus gallus (Chicken).